A 590-amino-acid polypeptide reads, in one-letter code: Putative ABC transporter ATP-binding protein MM_3016 (590 aa).

ABC transporter domains follow at residues 11 to 251 (VRFE…KLGI) and 317 to 550 (VRIE…AGLI). ATP contacts are provided by residues 45-52 (GPSGCGKS) and 350-357 (GHNGAGKT).

This sequence belongs to the ABC transporter superfamily.

It localises to the cell membrane. In terms of biological role, probably part of an ABC transporter complex. Responsible for energy coupling to the transport system. This is Putative ABC transporter ATP-binding protein MM_3016 from Methanosarcina mazei (strain ATCC BAA-159 / DSM 3647 / Goe1 / Go1 / JCM 11833 / OCM 88) (Methanosarcina frisia).